The sequence spans 860 residues: MQEQYRPEEIESKVQLHWDEKRTFEVTEDESKEKYYCLSMLPYPSGRLHMGHVRNYTIGDVIARYQRMLGKNVLQPIGWDAFGLPAEGAAVKNNTAPAPWTYDNIAYMKNQLKMLGFGYDWSRELATCTPEYYRWEQKFFTELYKKGLVYKKTSAVNWCPNDQTVLANEQVIDGCCWRCDTKVERKEIPQWFIKITAYADELLNDLDKLDHWPDTVKTMQRNWIGRSEGVEITFNVNDYDNMLTVYTTRPDTFMGCTYLAVAAGHPLAQKAAENNPELAAFIDECRNTKVAEAEMATMEKKGVDTGFKAVHPLTGEEIPVWAANFVLMEYGTGAVMAVPGHDQRDYEFASKYGLNIKPVILAADGSEPDLSQQALTEKGVLFNSGEFNGLDHEAAFNAIADKLTAMGVGERKVNYRLRDWGVSRQRYWGAPIPMVTLEDGTVMPTPDDQLPVILPEDVVMDGITSPIKADPEWAKTTVNGMPALRETDTFDTFMESSWYYARYTCPEYKEGMLDSEAANYWLPVDIYIGGIEHAIMHLLYFRFFHKLMRDAGMVNSDEPAKQLLCQGMVLADAFYYVGENGERNWVSPVDAIVERDEKGRIVKAKDAAGHELVYTGMSKMSKSKNNGIDPQVMVERYGADTVRLFMMFASPADMTLEWQESGVEGANRFLKRVWKLVYEHTAKGDVAALNVDALTEDQKALRRDVHKTIAKVTDDIGRRQTFNTAIAAIMELMNKLAKAPTDGEQDRALMQEALLAVVRMLNPFTPHICFTLWQELKGEGDIDNAPWPVADEKAMVEDSTLVVVQVNGKVRAKITVLVDATEEQVRERAGQEHLVAKYLDGVTVRKVIYVPGKLLNLVVG.

The 'HIGH' region motif lies at 42–52 (PYPSGRLHMGH). The short motif at 619–623 (KMSKS) is the 'KMSKS' region element. ATP is bound at residue lysine 622.

The protein belongs to the class-I aminoacyl-tRNA synthetase family.

Its subcellular location is the cytoplasm. It carries out the reaction tRNA(Leu) + L-leucine + ATP = L-leucyl-tRNA(Leu) + AMP + diphosphate. This chain is Leucine--tRNA ligase, found in Shigella sonnei (strain Ss046).